The primary structure comprises 286 residues: 33 kDa chaperonin (286 aa).

Intrachain disulfides connect C225–C227 and C258–C261.

It belongs to the HSP33 family. In terms of processing, under oxidizing conditions two disulfide bonds are formed involving the reactive cysteines. Under reducing conditions zinc is bound to the reactive cysteines and the protein is inactive.

It is found in the cytoplasm. Its function is as follows. Redox regulated molecular chaperone. Protects both thermally unfolding and oxidatively damaged proteins from irreversible aggregation. Plays an important role in the bacterial defense system toward oxidative stress. This chain is 33 kDa chaperonin, found in Shewanella frigidimarina (strain NCIMB 400).